Here is a 194-residue protein sequence, read N- to C-terminus: Mitochondrial import inner membrane translocase subunit Tim22 (194 aa).

Disulfide bonds link Cys69-Cys141 and Cys160-Cys179. 3 consecutive transmembrane segments (helical) span residues 74–94, 123–143, and 170–190; these read ALAC…TAGI, MSYA…ECLV, and AGLK…AAID.

Belongs to the Tim17/Tim22/Tim23 family. As to quaternary structure, component of the TIM22 complex, whose core is composed of TIMM22, associated with peripheral protein FXC1/TIMM10B and the 70 kDa heterohexamer. In most cases, the 70 kDa complex is composed of TIMM9 and TIMM10 (TIMM10A or TIMM10B). A small fraction of the 70 kDa complex is composed of TIMM8 (TIMM8A/DDP1 or TIMM8B/DDP2) and TIMM13. The TIM22 complex also contains AGK and TIMM29. Interacts directly with TIMM9, TIMM10A and FXC1/TIMM10B. Interacts (when oxidized) with TIMM29; interaction is direct. Post-translationally, disulfide bonds promote efficient assembly of the TIM22 complex.

It is found in the mitochondrion inner membrane. Essential core component of the TIM22 complex, a complex that mediates the import and insertion of multi-pass transmembrane proteins into the mitochondrial inner membrane. In the TIM22 complex, it constitutes the voltage-activated and signal-gated channel. Forms a twin-pore translocase that uses the membrane potential as external driving force in 2 voltage-dependent steps. The polypeptide is Mitochondrial import inner membrane translocase subunit Tim22 (TIMM22) (Bos taurus (Bovine)).